A 374-amino-acid chain; its full sequence is Alginate lyase (374 aa).

Positions 1–23 (MHKTRLALSCLLGSLLLSGAVHA) are cleaved as a signal peptide. Substrate-binding positions include 62–63 (SK), 135–136 (HT), and tyrosine 253.

This sequence belongs to the polysaccharide lyase 5 family.

It localises to the periplasm. The enzyme catalyses Eliminative cleavage of alginate to give oligosaccharides with 4-deoxy-alpha-L-erythro-hex-4-enuronosyl groups at their non-reducing ends and beta-D-mannuronate at their reducing end.. Catalyzes the depolymerization of alginate by cleaving the beta-1,4 glycosidic bond between two adjacent sugar residues via a beta-elimination mechanism. May serve to degrade mislocalized alginate that is trapped in the periplasmic space. In Azotobacter vinelandii (strain DJ / ATCC BAA-1303), this protein is Alginate lyase.